We begin with the raw amino-acid sequence, 685 residues long: ATP-dependent permease MDL1 (685 aa).

A compositionally biased stretch (polar residues) spans 48–70; sequence FNSKSSTAPNTEANSNGSTNSQS. The segment at 48–76 is disordered; it reads FNSKSSTAPNTEANSNGSTNSQSDTKKPR. Asn63 is a glycosylation site (N-linked (GlcNAc...) asparagine). A helical transmembrane segment spans residues 96 to 116; sequence LIFFALICLVTTSATSMALPL. An ABC transmembrane type-1 domain is found at 97 to 407; sequence IFFALICLVT…LGNFYTELMK (311 aa). Residues 125–147 are disordered; that stretch reads TKKDDDDDKDNDNDDKDDTQPSD. A compositionally biased stretch (acidic residues) spans 129–141; that stretch reads DDDDKDNDNDDKD. A helical membrane pass occupies residues 158 to 180; that stretch reads FYSALGVLFIVSASTNFGRIYLL. Asn239 carries an N-linked (GlcNAc...) asparagine glycan. Residues 266–282 form a helical membrane-spanning segment; that stretch reads LCMSLIFPPLITMSWFY. An N-linked (GlcNAc...) asparagine glycan is attached at Asn336. 2 consecutive transmembrane segments (helical) span residues 353–373 and 381–401; these read GFIG…LIGA and LSSF…LGNF. Residues 440–680 enclose the ABC transporter domain; sequence IEFKGIDFTY…PNSQFNKLLK (241 aa). 475–482 contributes to the ATP binding site; sequence GPSGSGKS. 2 N-linked (GlcNAc...) asparagine glycosylation sites follow: Asn553 and Asn576.

It belongs to the ABC transporter superfamily. ABCB family. Mitochondrial peptide exporter (TC 3.A.1.212) subfamily.

It is found in the membrane. The polypeptide is ATP-dependent permease MDL1 (MDL1) (Candida albicans (Yeast)).